Reading from the N-terminus, the 304-residue chain is Undecaprenyl-diphosphatase (304 aa).

The next 7 helical transmembrane spans lie at 1–21, 54–74, 90–110, 114–134, 192–212, 225–245, and 253–273; these read MSLL…FLPV, TTLA…AAGL, LAWF…LFEE, ALGN…LLAA, FLLS…KTVP, LVGT…LLGW, and LFVV…WQGV.

This sequence belongs to the UppP family.

It localises to the cell inner membrane. The enzyme catalyses di-trans,octa-cis-undecaprenyl diphosphate + H2O = di-trans,octa-cis-undecaprenyl phosphate + phosphate + H(+). In terms of biological role, catalyzes the dephosphorylation of undecaprenyl diphosphate (UPP). Confers resistance to bacitracin. The chain is Undecaprenyl-diphosphatase from Anaeromyxobacter sp. (strain Fw109-5).